The chain runs to 165 residues: PTS system glucose-specific EIIA component (165 aa).

The PTS EIIA type-1 domain occupies 33–137 (DPVFAGRMMG…STITPIVITN (105 aa)). His-70 and His-85 together coordinate Zn(2+). The active-site Tele-phosphohistidine intermediate; for EIIA activity is His-85. The residue at position 85 (His-85) is a Phosphohistidine; by HPr.

As to quaternary structure, heterodimer with glycerol kinase (glpk). The cofactor is Zn(2+).

It localises to the cytoplasm. In terms of biological role, the phosphoenolpyruvate-dependent sugar phosphotransferase system (sugar PTS), a major carbohydrate active transport system, catalyzes the phosphorylation of incoming sugar substrates concomitantly with their translocation across the cell membrane. The enzyme II complex composed of PtsG and Crr is involved in glucose transport. This is PTS system glucose-specific EIIA component (crr) from Bacillus anthracis.